Consider the following 74-residue polypeptide: MFTMKKSLLLFFFLGTISLSLCQEERNADEDDGEMTEEEKRGILDTLKHLAKTAGKGALQSLLNHASCKLSGQC.

Residues 1 to 22 (MFTMKKSLLLFFFLGTISLSLC) form the signal peptide. Residues 23 to 40 (QEERNADEDDGEMTEEEK) constitute a propeptide that is removed on maturation. Cysteines 68 and 74 form a disulfide.

The protein belongs to the frog skin active peptide (FSAP) family. Brevinin subfamily. As to expression, expressed by the skin glands.

It is found in the secreted. In terms of biological role, antimicrobial peptide. This Rana temporaria (European common frog) protein is Brevinin-2Tb.